The primary structure comprises 371 residues: Succinyl-diaminopimelate desuccinylase (371 aa).

Position 68 (His68) interacts with Zn(2+). Asp70 is an active-site residue. Asp99 contributes to the Zn(2+) binding site. Residue Glu130 is the Proton acceptor of the active site. Residues Glu131, Glu159, and His344 each coordinate Zn(2+).

It belongs to the peptidase M20A family. DapE subfamily. In terms of assembly, homodimer. The cofactor is Zn(2+). Co(2+) serves as cofactor.

It catalyses the reaction N-succinyl-(2S,6S)-2,6-diaminopimelate + H2O = (2S,6S)-2,6-diaminopimelate + succinate. It participates in amino-acid biosynthesis; L-lysine biosynthesis via DAP pathway; LL-2,6-diaminopimelate from (S)-tetrahydrodipicolinate (succinylase route): step 3/3. Catalyzes the hydrolysis of N-succinyl-L,L-diaminopimelic acid (SDAP), forming succinate and LL-2,6-diaminopimelate (DAP), an intermediate involved in the bacterial biosynthesis of lysine and meso-diaminopimelic acid, an essential component of bacterial cell walls. This chain is Succinyl-diaminopimelate desuccinylase, found in Acidiphilium cryptum (strain JF-5).